The primary structure comprises 107 residues: CRISPR-associated endoribonuclease Cas2 (107 aa).

Mg(2+) is bound at residue Asp-6.

This sequence belongs to the CRISPR-associated endoribonuclease Cas2 protein family. As to quaternary structure, homodimer, forms a heterotetramer with a Cas1 homodimer. The cofactor is Mg(2+).

CRISPR (clustered regularly interspaced short palindromic repeat), is an adaptive immune system that provides protection against mobile genetic elements (viruses, transposable elements and conjugative plasmids). CRISPR clusters contain sequences complementary to antecedent mobile elements and target invading nucleic acids. CRISPR clusters are transcribed and processed into CRISPR RNA (crRNA). Functions as a ssRNA-specific endoribonuclease. Involved in the integration of spacer DNA into the CRISPR cassette. This chain is CRISPR-associated endoribonuclease Cas2, found in Streptococcus mutans serotype c (strain NN2025).